A 397-amino-acid polypeptide reads, in one-letter code: MVKETTYYDVLGVKPNATQEELKKAYRKLALKYHPDKNPNEGEKFKQISQAYEVLADSKKRELYDKGGEQAIKEGGAGGGFGSPMDIFDMFFGGGGRMQRERRGKNVVHQLSVTLEDLYNGATRKLALQKNVICDKCEGRGGKKGAVECCPNCRGTGMQIRIHQIGPGMVQQIQSVCMECQGHGERISPKDRCKSCNGRKIVREKKILEVHIDKGMKDGQKITFHGEGDQEPGLEPGDIIIVLDQKDHAVFTRRGEDLFMCMDIQLVEALCGFQKPISTLDNRTIVITSHPGQIVKHGDIKCVLNEGMPIYRRPYEKGRLIIEFKVNFPENGFLSPDKLSLLEKLLPERKEVEETDEMDQVELVDFDPNQERRRHYNGEAYEDDEHHPRGGVQCQTS.

Positions 6 to 68 (TYYDVLGVKP…KKRELYDKGG (63 aa)) constitute a J domain. Residue lysine 66 is modified to N6-acetyllysine. The residue at position 83 (serine 83) is a Phosphoserine. Residues 121–205 (GATRKLALQK…CNGRKIVREK (85 aa)) form a CR-type zinc finger. Residues cysteine 134, cysteine 137, cysteine 150, cysteine 153, cysteine 177, cysteine 180, cysteine 193, and cysteine 196 each coordinate Zn(2+). 4 CXXCXGXG motif repeats span residues 134 to 141 (CDKCEGRG), 150 to 157 (CPNCRGTG), 177 to 184 (CMECQGHG), and 193 to 200 (CKSCNGRK). Serine 335 carries the post-translational modification Phosphoserine. The tract at residues 352–397 (VEETDEMDQVELVDFDPNQERRRHYNGEAYEDDEHHPRGGVQCQTS) is disordered. The span at 353–365 (EETDEMDQVELVD) shows a compositional bias: acidic residues. Tyrosine 381 carries the phosphotyrosine modification. Position 394 is a cysteine methyl ester (cysteine 394). Residue cysteine 394 is the site of S-farnesyl cysteine attachment. Residues 395 to 397 (QTS) constitute a propeptide, removed in mature form.

Identified in a complex with HSPA1B and BAX. Interacts with RNF207.

It localises to the membrane. The protein resides in the cytoplasm. The protein localises to the microsome. Its subcellular location is the mitochondrion. It is found in the nucleus. It localises to the perinuclear region. Functionally, co-chaperone for HSPA8/Hsc70. Plays a role in protein transport into mitochondria via its role as co-chaperone. Stimulates ATP hydrolysis, but not the folding of unfolded proteins mediated by HSPA1A (in vitro). Promotes apoptosis in response to cellular stress mediated by exposure to anisomycin or UV. Functions as co-chaperone for HSPA1B and negatively regulates the translocation of BAX from the cytosol to mitochondria in response to cellular stress, thereby protecting cells against apoptosis. The polypeptide is DnaJ homolog subfamily A member 1 (Dnaja1) (Mus musculus (Mouse)).